We begin with the raw amino-acid sequence, 224 residues long: Envelope glycoprotein L (224 aa).

The signal sequence occupies residues Met-1–Gly-16. The tract at residues Gly-20–Val-161 is interaction with gH. A gL alphaherpesvirus-type domain is found at Ala-23 to Leu-201. Cystine bridges form between Cys-44/Cys-76 and Cys-149/Cys-160. Residues Pro-168 to Asn-224 form a disordered region. Residues Arg-213–Asn-224 are compositionally biased toward basic residues.

It belongs to the herpesviridae glycoprotein L (gL) family. Alphaherpesvirinae gL subfamily. As to quaternary structure, interacts with glycoprotein H (gH); this interaction is necessary for the correct processing and cell surface expression of gH. The heterodimer gH/gL seems to interact with gB trimers during fusion.

Its subcellular location is the virion membrane. The protein localises to the host cell membrane. It is found in the host Golgi apparatus. It localises to the host trans-Golgi network. Its function is as follows. The heterodimer glycoprotein H-glycoprotein L is required for the fusion of viral and plasma membranes leading to virus entry into the host cell. Acts as a functional inhibitor of gH and maintains gH in an inhibited form. Upon binding to host integrins, gL dissociates from gH leading to activation of the viral fusion glycoproteins gB and gH. The sequence is that of Envelope glycoprotein L from Homo sapiens (Human).